A 216-amino-acid chain; its full sequence is Pyridoxine/pyridoxamine 5'-phosphate oxidase (216 aa).

Residues 9 to 12 and arginine 67 each bind substrate; that span reads RLSY. Residues 62 to 67, 77 to 78, lysine 84, and glutamine 106 each bind FMN; these read RIVLLR and YT. Substrate-binding residues include tyrosine 124, arginine 128, and serine 132. Residues 142 to 143 and tryptophan 188 contribute to the FMN site; that span reads QS. Substrate is bound at residue 194–196; the sequence is RMH. Arginine 198 provides a ligand contact to FMN.

The protein belongs to the pyridoxamine 5'-phosphate oxidase family. As to quaternary structure, homodimer. FMN is required as a cofactor.

It catalyses the reaction pyridoxamine 5'-phosphate + O2 + H2O = pyridoxal 5'-phosphate + H2O2 + NH4(+). The enzyme catalyses pyridoxine 5'-phosphate + O2 = pyridoxal 5'-phosphate + H2O2. It functions in the pathway cofactor metabolism; pyridoxal 5'-phosphate salvage; pyridoxal 5'-phosphate from pyridoxamine 5'-phosphate: step 1/1. Its pathway is cofactor metabolism; pyridoxal 5'-phosphate salvage; pyridoxal 5'-phosphate from pyridoxine 5'-phosphate: step 1/1. Catalyzes the oxidation of either pyridoxine 5'-phosphate (PNP) or pyridoxamine 5'-phosphate (PMP) into pyridoxal 5'-phosphate (PLP). The protein is Pyridoxine/pyridoxamine 5'-phosphate oxidase of Psychrobacter cryohalolentis (strain ATCC BAA-1226 / DSM 17306 / VKM B-2378 / K5).